The sequence spans 372 residues: Glutamate 5-kinase (372 aa).

Lys-14 contacts ATP. Residues Ser-54, Asp-141, and Asn-153 each coordinate substrate. Residues 173-174 and 215-221 each bind ATP; these read TD and TGGMLTK. One can recognise a PUA domain in the interval 280-358; that stretch reads AGRLVLDDGA…RDIERLLGYV (79 aa).

This sequence belongs to the glutamate 5-kinase family.

It is found in the cytoplasm. The enzyme catalyses L-glutamate + ATP = L-glutamyl 5-phosphate + ADP. It participates in amino-acid biosynthesis; L-proline biosynthesis; L-glutamate 5-semialdehyde from L-glutamate: step 1/2. Catalyzes the transfer of a phosphate group to glutamate to form L-glutamate 5-phosphate. This chain is Glutamate 5-kinase, found in Laribacter hongkongensis (strain HLHK9).